Reading from the N-terminus, the 480-residue chain is MTVRVRIAPSPTGNLHIGTARTAVFNWLFARHHGGTFILRIEDTDLERSRPEYTENIMTGLRWLGLNWDEGPFFQSQRLDLYQKAVKQLLDQGLAYRCYTTSEELEALREGQKAKGEAPRYDNRHRHLTPEQEAEFKAQGRSFVIRFKIDDEREIVWNDLVRGKMSWRGSDLGGDMVIARASENDTGQPLYNFVVVIDDIDMQISHVIRGEDHIANTAKQILLYEAFGAKIPEFAHTPLILNMEGRKLSKRDGVTSISDFKQMGFTSEGLVNYMTLLGWSPPDSTQEIFTLEAAAKEFTFERVNKAGAKFDWAKLDWLNSQYIHNTPVDQLTDLLIPYWEAAGYSLAGGRDRPWLEQLVGLLSASLTRLTDAVDMSKLFFTETVELSEEGSKQLQQEGSKAVLEAIIAALETQAQLTETAAQDIIKQVVKGQNVKKGLVMRSLRVALTGDVHGPDLIQSWLLLNQIGLDKPRLNQAIAVS.

The 'HIGH' region signature appears at 9 to 19 (PSPTGNLHIGT). A 'KMSKS' region motif is present at residues 247–251 (KLSKR). ATP is bound at residue Lys-250.

This sequence belongs to the class-I aminoacyl-tRNA synthetase family. Glutamate--tRNA ligase type 1 subfamily. As to quaternary structure, monomer.

The protein resides in the cytoplasm. The enzyme catalyses tRNA(Glu) + L-glutamate + ATP = L-glutamyl-tRNA(Glu) + AMP + diphosphate. Catalyzes the attachment of glutamate to tRNA(Glu) in a two-step reaction: glutamate is first activated by ATP to form Glu-AMP and then transferred to the acceptor end of tRNA(Glu). The polypeptide is Glutamate--tRNA ligase (Nostoc sp. (strain PCC 7120 / SAG 25.82 / UTEX 2576)).